Reading from the N-terminus, the 217-residue chain is Probable GTP-binding protein EngB (217 aa).

One can recognise an EngB-type G domain in the interval 40 to 217 (DVPEIAFAGR…RAAVLQDAMG (178 aa)). Residues 48 to 55 (GRSNVGKS), 75 to 79 (GRTQE), 95 to 98 (DMPG), 162 to 165 (TKAD), and 196 to 198 (TSS) contribute to the GTP site. Serine 55 and threonine 77 together coordinate Mg(2+).

Belongs to the TRAFAC class TrmE-Era-EngA-EngB-Septin-like GTPase superfamily. EngB GTPase family. Mg(2+) serves as cofactor.

Necessary for normal cell division and for the maintenance of normal septation. The sequence is that of Probable GTP-binding protein EngB from Novosphingobium aromaticivorans (strain ATCC 700278 / DSM 12444 / CCUG 56034 / CIP 105152 / NBRC 16084 / F199).